The sequence spans 776 residues: Acetone carboxylase alpha subunit (776 aa).

Heterohexamer of two alpha, two beta and two gamma subunits. Requires Fe cation as cofactor. It depends on Mg(2+) as a cofactor. Zn(2+) is required as a cofactor. In terms of processing, the N-terminus is blocked.

It catalyses the reaction acetone + hydrogencarbonate + 2 ATP + 3 H2O = acetoacetate + 2 AMP + 4 phosphate + 4 H(+). Catalyzes the carboxylation of acetone to form acetoacetate. Has a reduced activity on butanone, and no activity on 2-pentatone, 3-pentatone, 2-hexanone, chloroacetone, pyruvate, phosphoenolpyruvate, acetaldehyde, propionaldehyde and propylene oxide. The sequence is that of Acetone carboxylase alpha subunit from Xanthobacter autotrophicus (strain ATCC BAA-1158 / Py2).